Reading from the N-terminus, the 164-residue chain is UPF0304 protein YfbU (164 aa).

This sequence belongs to the UPF0304 family.

This Salmonella enteritidis PT4 (strain P125109) protein is UPF0304 protein YfbU.